Consider the following 266-residue polypeptide: Glutamate racemase (266 aa).

Substrate contacts are provided by residues 9 to 10 (DS) and 41 to 42 (YG). Cys-72 serves as the catalytic Proton donor/acceptor. Residue 73 to 74 (NT) coordinates substrate. Cys-184 functions as the Proton donor/acceptor in the catalytic mechanism. 185-186 (TH) is a binding site for substrate.

It belongs to the aspartate/glutamate racemases family.

The catalysed reaction is L-glutamate = D-glutamate. It functions in the pathway cell wall biogenesis; peptidoglycan biosynthesis. In terms of biological role, provides the (R)-glutamate required for cell wall biosynthesis. This Staphylococcus carnosus (strain TM300) protein is Glutamate racemase.